The sequence spans 227 residues: GTP:AMP phosphotransferase AK3, mitochondrial (227 aa).

GTP is bound by residues glycine 17, glycine 19, lysine 20, glycine 21, and threonine 22. Residue lysine 20 is modified to N6-succinyllysine. Position 34 is an N6-acetyllysine (lysine 34). Serine 37 carries the post-translational modification Phosphoserine. The interval 37-66 (SSGDLLRDNMLRGTEIGVLAKAFIDQGKLI) is NMP. Serine 38 and arginine 43 together coordinate AMP. At lysine 57 the chain carries N6-succinyllysine. Lysine 64 lines the AMP pocket. An N6-acetyllysine; alternate mark is found at lysine 64 and lysine 80. Residues lysine 64 and lysine 80 each carry the N6-succinyllysine; alternate modification. Glycine 91, arginine 94, and glutamine 98 together coordinate AMP. The interval 127–164 (ARWIHPASGRVYNIEFNPPKTVGIDDLTGEPLIQREDD) is LID. GTP contacts are provided by arginine 128, tyrosine 138, asparagine 139, arginine 161, and arginine 172. 2 positions are modified to N6-acetyllysine; alternate: lysine 174 and lysine 189. N6-succinyllysine; alternate occurs at positions 174 and 189. Threonine 201 serves as a coordination point for GTP. Residue lysine 203 is modified to N6-acetyllysine.

Belongs to the adenylate kinase family. AK3 subfamily. As to quaternary structure, monomer. As to expression, highly expressed in heart, skeletal muscle and liver, moderately expressed in pancreas and kidney, and weakly expressed in placenta, brain and lung.

The protein localises to the mitochondrion matrix. The catalysed reaction is a ribonucleoside 5'-triphosphate + AMP = a ribonucleoside 5'-diphosphate + ADP. It carries out the reaction GTP + AMP = GDP + ADP. It catalyses the reaction ITP + AMP = IDP + ADP. Inhibited by ATP. In terms of biological role, mitochondrial adenylate kinase with a specific GTP:AMP phosphotransferase activity. Could also use ITP as phosphate donor. Its physiological function is to recycle GTP into GDP which is necessary for the TCA cycle in the mitochondrial matrix. The polypeptide is GTP:AMP phosphotransferase AK3, mitochondrial (Homo sapiens (Human)).